Here is a 252-residue protein sequence, read N- to C-terminus: PF03932 family protein CutC (252 aa).

It belongs to the CutC family.

It localises to the cytoplasm. In Sodalis glossinidius (strain morsitans), this protein is PF03932 family protein CutC.